We begin with the raw amino-acid sequence, 336 residues long: tRNA N6-adenosine threonylcarbamoyltransferase (336 aa).

2 residues coordinate Fe cation: histidine 114 and histidine 118. Substrate-binding positions include 136–140, aspartate 169, glycine 182, aspartate 186, and asparagine 275; that span reads LVSGG. A Fe cation-binding site is contributed by aspartate 301.

Belongs to the KAE1 / TsaD family. Requires Fe(2+) as cofactor.

The protein resides in the cytoplasm. The catalysed reaction is L-threonylcarbamoyladenylate + adenosine(37) in tRNA = N(6)-L-threonylcarbamoyladenosine(37) in tRNA + AMP + H(+). In terms of biological role, required for the formation of a threonylcarbamoyl group on adenosine at position 37 (t(6)A37) in tRNAs that read codons beginning with adenine. Is involved in the transfer of the threonylcarbamoyl moiety of threonylcarbamoyl-AMP (TC-AMP) to the N6 group of A37, together with TsaE and TsaB. TsaD likely plays a direct catalytic role in this reaction. In Streptococcus pneumoniae serotype 4 (strain ATCC BAA-334 / TIGR4), this protein is tRNA N6-adenosine threonylcarbamoyltransferase.